The primary structure comprises 242 residues: NAD-dependent protein deacetylase (242 aa).

The Deacetylase sirtuin-type domain occupies 1-242; the sequence is MQQFEEVRTI…EFVEGLSSIK (242 aa). Positions 23, 27, 34, 35, 102, 104, 105, and 120 each coordinate NAD(+). Residue Phe-34 coordinates nicotinamide. The nicotinamide site is built by Ile-104 and Asp-105. The active-site Proton acceptor is His-120. The Zn(2+) site is built by Cys-128, Cys-131, Cys-148, and Cys-151. Residues Thr-187, Ser-188, Asn-213, and Ile-231 each contribute to the NAD(+) site.

Belongs to the sirtuin family. Class U subfamily. Zn(2+) is required as a cofactor.

The protein resides in the cytoplasm. The enzyme catalyses N(6)-acetyl-L-lysyl-[protein] + NAD(+) + H2O = 2''-O-acetyl-ADP-D-ribose + nicotinamide + L-lysyl-[protein]. Functionally, NAD-dependent protein deacetylase which modulates the activities of several enzymes which are inactive in their acetylated form. The polypeptide is NAD-dependent protein deacetylase (Bacillus anthracis).